A 65-amino-acid polypeptide reads, in one-letter code: Large ribosomal subunit protein bL35 (65 aa).

It belongs to the bacterial ribosomal protein bL35 family.

This chain is Large ribosomal subunit protein bL35, found in Ruminiclostridium cellulolyticum (strain ATCC 35319 / DSM 5812 / JCM 6584 / H10) (Clostridium cellulolyticum).